We begin with the raw amino-acid sequence, 369 residues long: uncharacterized protein (369 aa).

A signal peptide spans 1-19 (MKKLIAVAVLSACGSLAHA).

This is an uncharacterized protein from Haemophilus influenzae (strain ATCC 51907 / DSM 11121 / KW20 / Rd).